Reading from the N-terminus, the 108-residue chain is Ig kappa chain V-V region HP 124E1 (108 aa).

Positions Asp1–Cys23 are framework-1. An intrachain disulfide couples Cys23 to Cys88. Residues Arg24–Asn34 are complementarity-determining-1. The segment at Trp35 to Tyr49 is framework-2. Residues Tyr50–Ser56 are complementarity-determining-2. The segment at Gly57–Cys88 is framework-3. Residues Gln89–Thr97 form a complementarity-determining-3 region. A framework-4 region spans residues Phe98–Arg108.

The sequence is that of Ig kappa chain V-V region HP 124E1 from Mus musculus (Mouse).